Here is a 255-residue protein sequence, read N- to C-terminus: 2-(S)-hydroxypropyl-CoM dehydrogenase 3 (255 aa).

Residues isoleucine 19, aspartate 38, 64–65 (DV), and asparagine 91 contribute to the NAD(+) site. Positions 143 and 156 each coordinate (S)-2-hydroxypropyl-coenzyme M. The Proton acceptor role is filled by tyrosine 156. Lysine 160 provides a ligand contact to NAD(+). Threonine 188 is a binding site for (S)-2-hydroxypropyl-coenzyme M. 189–193 (VTSTG) contributes to the NAD(+) binding site. Position 215 (tyrosine 215) interacts with (S)-2-hydroxypropyl-coenzyme M.

It belongs to the short-chain dehydrogenases/reductases (SDR) family. As to quaternary structure, homotetramer.

It catalyses the reaction (S)-2-hydroxypropyl-coenzyme M + NAD(+) = 2-oxopropyl-coenzyme M + NADH + H(+). Not inhibited by 2-(2-methyl-2-hydroxypropylthio)ethanesulfonate (M-HPC), an achiral analog of both R-HPC and S-HPC. Functionally, involved in aliphatic epoxide carboxylation. Catalyzes the reversible oxidation of (2S)-2-hydroxypropyl-coenzyme M (S-HPC) to 2-oxopropyl-coenzyme M (2-KPC). The enzyme is highly specific for the S enantiomers. In vitro can also use the aliphatic ketone 2-butanone and the aliphatic alcohol 2-propanol, and shows an inherent stereoselectivity for 2-butanone reduction. In Xanthobacter autotrophicus (strain ATCC BAA-1158 / Py2), this protein is 2-(S)-hydroxypropyl-CoM dehydrogenase 3.